The sequence spans 221 residues: Thiamine-phosphate synthase (221 aa).

Residues 46–50 (QFREK) and Asn-83 each bind 4-amino-2-methyl-5-(diphosphooxymethyl)pyrimidine. 2 residues coordinate Mg(2+): Asp-84 and Asp-103. Position 122 (Ser-122) interacts with 4-amino-2-methyl-5-(diphosphooxymethyl)pyrimidine. Residue 149–151 (TQS) coordinates 2-[(2R,5Z)-2-carboxy-4-methylthiazol-5(2H)-ylidene]ethyl phosphate. Residue Lys-152 participates in 4-amino-2-methyl-5-(diphosphooxymethyl)pyrimidine binding. 2-[(2R,5Z)-2-carboxy-4-methylthiazol-5(2H)-ylidene]ethyl phosphate-binding positions include Gly-181 and 201-202 (IS).

It belongs to the thiamine-phosphate synthase family. Mg(2+) is required as a cofactor.

It catalyses the reaction 2-[(2R,5Z)-2-carboxy-4-methylthiazol-5(2H)-ylidene]ethyl phosphate + 4-amino-2-methyl-5-(diphosphooxymethyl)pyrimidine + 2 H(+) = thiamine phosphate + CO2 + diphosphate. It carries out the reaction 2-(2-carboxy-4-methylthiazol-5-yl)ethyl phosphate + 4-amino-2-methyl-5-(diphosphooxymethyl)pyrimidine + 2 H(+) = thiamine phosphate + CO2 + diphosphate. The enzyme catalyses 4-methyl-5-(2-phosphooxyethyl)-thiazole + 4-amino-2-methyl-5-(diphosphooxymethyl)pyrimidine + H(+) = thiamine phosphate + diphosphate. The protein operates within cofactor biosynthesis; thiamine diphosphate biosynthesis; thiamine phosphate from 4-amino-2-methyl-5-diphosphomethylpyrimidine and 4-methyl-5-(2-phosphoethyl)-thiazole: step 1/1. Its function is as follows. Condenses 4-methyl-5-(beta-hydroxyethyl)thiazole monophosphate (THZ-P) and 2-methyl-4-amino-5-hydroxymethyl pyrimidine pyrophosphate (HMP-PP) to form thiamine monophosphate (TMP). This is Thiamine-phosphate synthase from Actinobacillus succinogenes (strain ATCC 55618 / DSM 22257 / CCUG 43843 / 130Z).